We begin with the raw amino-acid sequence, 293 residues long: MPVILDGKRLSEALQAKIAMAFSAYRGPKPILGILQVGNKEDSNIYVAHKLKVAESLGFLTKLVKMPENSTQDEIIGTLRNAAAEVTGIIVQLPLVSNRIENLQEILDNIPIEKDIDGLSSYNLASNYNCKDNFLSATPKGIILLLKHYNINFRSTVIALVGQSNIVGKPLAKYLSNFKNNTIKTYVKDTPKDDLHEAKIVIVATGVYQSVTADQLANGTVLIDVGIHRQGKTIHGDLDFASCFKKASYITPVPGGVGPLTVVALMFNLIKALILQNPNLDHEFLSLKEFINI.

NADP(+)-binding positions include 162–164 (GQS) and Ile-227.

The protein belongs to the tetrahydrofolate dehydrogenase/cyclohydrolase family. Homodimer.

The catalysed reaction is (6R)-5,10-methylene-5,6,7,8-tetrahydrofolate + NADP(+) = (6R)-5,10-methenyltetrahydrofolate + NADPH. It carries out the reaction (6R)-5,10-methenyltetrahydrofolate + H2O = (6R)-10-formyltetrahydrofolate + H(+). It participates in one-carbon metabolism; tetrahydrofolate interconversion. In terms of biological role, catalyzes the oxidation of 5,10-methylenetetrahydrofolate to 5,10-methenyltetrahydrofolate and then the hydrolysis of 5,10-methenyltetrahydrofolate to 10-formyltetrahydrofolate. In Metamycoplasma arthritidis (strain 158L3-1) (Mycoplasma arthritidis), this protein is Bifunctional protein FolD.